Reading from the N-terminus, the 422-residue chain is Solute carrier family 35 member D3 (422 aa).

Transmembrane regions (helical) follow at residues 9 to 29 (VLGISVAIAHGVFSGSLNILL), 38 to 58 (FSFLTLVQCLTSSTAALSLEL), 64 to 84 (LIAVPPFGLSLARSFAGVAVL), 103 to 123 (MYVVFKRCLPLVTMLIGVLVL), 131 to 151 (GVLAAVLITTCGAALAGAGDL), 155 to 175 (PIGYVTGVLAVLVHAAYLVLI), 187 to 207 (LTAQYVIAVSATPLLVICSFA), 224 to 244 (AMVSIFVACILIGCAMNFTTL), 257 to 277 (FVGVVKSIATITVGMVAFSDV), and 280 to 300 (TSLFIAGVVVNTLGSIIYCVA). A disordered region spans residues 339-365 (AKSGNSEPESAEGAGDSVQQGGQESRG). A compositionally biased stretch (polar residues) spans 355 to 364 (SVQQGGQESR).

The protein belongs to the TPT transporter family. SLC35D subfamily. As to quaternary structure, could interact with ATG14, BECN1 and PIK3C3 that form the PI3KC3-C1/AIC/autophagy initiation complex; enhancing the formation of the AIC and promoting autophagy. Expressed in brain. Expressed in subsets of dopaminergic neurons. Expressed in maturing megakaryocytes.

It localises to the cytoplasmic vesicle. Its subcellular location is the secretory vesicle. It is found in the synaptic vesicle membrane. The protein resides in the early endosome membrane. The protein localises to the endoplasmic reticulum membrane. The catalysed reaction is UDP-alpha-D-glucose(in) = UDP-alpha-D-glucose(out). Its activity is regulated as follows. Inhibited by proton uncouplers that directly abolish the proton electrochemical gradient. In terms of biological role, probable UDP-glucose transmembrane transporter involved in UDP-glucose transport from the cytosol to the lumen of synaptic vesicles. It is involved in platelet dense granules maturation. Functionally, alternatively, could function as a molecular adapter enhancing the formation of the PI3KC3-C1/AIC/autophagy initiation complex to promote autophagy in dopaminergic neurons. Could also regulate the plasma membrane localization of the D(1A) dopamine receptor/DRD1 and dopamine signaling. In Mus musculus (Mouse), this protein is Solute carrier family 35 member D3.